A 523-amino-acid polypeptide reads, in one-letter code: 2-isopropylmalate synthase (523 aa).

The Pyruvate carboxyltransferase domain occupies 5–267 (VIIFDTTLRD…ETGINAKEIH (263 aa)). Mn(2+) contacts are provided by aspartate 14, histidine 202, histidine 204, and asparagine 238. Residues 392 to 523 (KLQQLVVHSD…QQNKRELGGV (132 aa)) form a regulatory domain region.

It belongs to the alpha-IPM synthase/homocitrate synthase family. LeuA type 1 subfamily. As to quaternary structure, homodimer. Requires Mn(2+) as cofactor.

It is found in the cytoplasm. It carries out the reaction 3-methyl-2-oxobutanoate + acetyl-CoA + H2O = (2S)-2-isopropylmalate + CoA + H(+). Its pathway is amino-acid biosynthesis; L-leucine biosynthesis; L-leucine from 3-methyl-2-oxobutanoate: step 1/4. Its function is as follows. Catalyzes the condensation of the acetyl group of acetyl-CoA with 3-methyl-2-oxobutanoate (2-ketoisovalerate) to form 3-carboxy-3-hydroxy-4-methylpentanoate (2-isopropylmalate). The sequence is that of 2-isopropylmalate synthase from Shewanella pealeana (strain ATCC 700345 / ANG-SQ1).